Reading from the N-terminus, the 381-residue chain is DNA primase DnaG (381 aa).

Residues 173-259 (DAILVVEGRS…EVEDLEKDEI (87 aa)) enclose the Toprim domain. The Mg(2+) site is built by Glu179, Asp221, and Asp223.

This sequence belongs to the archaeal DnaG primase family. In terms of assembly, forms a ternary complex with MCM helicase and DNA. Component of the archaeal exosome complex. Requires Mg(2+) as cofactor.

The enzyme catalyses ssDNA + n NTP = ssDNA/pppN(pN)n-1 hybrid + (n-1) diphosphate.. Functionally, RNA polymerase that catalyzes the synthesis of short RNA molecules used as primers for DNA polymerase during DNA replication. Also part of the exosome, which is a complex involved in RNA degradation. Acts as a poly(A)-binding protein that enhances the interaction between heteromeric, adenine-rich transcripts and the exosome. In Methanothermobacter thermautotrophicus (strain ATCC 29096 / DSM 1053 / JCM 10044 / NBRC 100330 / Delta H) (Methanobacterium thermoautotrophicum), this protein is DNA primase DnaG.